Here is a 138-residue protein sequence, read N- to C-terminus: Basic phospholipase A2 homolog Tpu-K49a (138 aa).

A signal peptide spans 1 to 16 (MRTLWIMAVLLVGVEG). 6 disulfide bridges follow: Cys-42–Cys-131, Cys-44–Cys-60, Cys-59–Cys-111, Cys-65–Cys-138, Cys-66–Cys-104, and Cys-91–Cys-102. Residues 121–133 (KKERINTKIFCKK) are important for membrane-damaging activities in eukaryotes and bacteria; heparin-binding.

In terms of assembly, monomer. In terms of tissue distribution, expressed by the venom gland.

Its subcellular location is the secreted. Snake venom phospholipase A2 homolog that lacks catalytic activity. Induces local edema a few hours after injection in the hind foot. Is myotoxic. A model of myotoxic mechanism has been proposed: an apo Lys49-PLA2 is activated by the entrance of a hydrophobic molecule (e.g. fatty acid) at the hydrophobic channel of the protein leading to a reorientation of a monomer. This reorientation causes a transition between 'inactive' to 'active' states, causing alignment of C-terminal and membrane-docking sites (MDoS) side-by-side and putting the membrane-disruption sites (MDiS) in the same plane, exposed to solvent and in a symmetric position for both monomers. The MDoS region stabilizes the toxin on membrane by the interaction of charged residues with phospholipid head groups. Subsequently, the MDiS region destabilizes the membrane with penetration of hydrophobic residues. This insertion causes a disorganization of the membrane, allowing an uncontrolled influx of ions (i.e. calcium and sodium), and eventually triggering irreversible intracellular alterations and cell death. This Craspedocephalus puniceus (Flat-nosed pitviper) protein is Basic phospholipase A2 homolog Tpu-K49a.